The chain runs to 744 residues: Probable methylmalonyl-CoA mutase, mitochondrial (744 aa).

One can recognise a B12-binding domain in the interval Gln-605–Ala-737. His-618 is an adenosylcob(III)alamin binding site.

Belongs to the methylmalonyl-CoA mutase family. Homodimer. Adenosylcob(III)alamin serves as cofactor.

The protein resides in the mitochondrion matrix. It carries out the reaction (R)-methylmalonyl-CoA = succinyl-CoA. Functionally, involved, in man, in the degradation of several amino acids, odd-chain fatty acids and cholesterol via propionyl-CoA to the tricarboxylic acid cycle. MCM has different functions in other species. The polypeptide is Probable methylmalonyl-CoA mutase, mitochondrial (mmcm-1) (Caenorhabditis elegans).